Here is a 334-residue protein sequence, read N- to C-terminus: Nucleoid-associated protein VS_0951 (334 aa).

This sequence belongs to the YejK family.

It is found in the cytoplasm. It localises to the nucleoid. In Vibrio atlanticus (strain LGP32) (Vibrio splendidus (strain Mel32)), this protein is Nucleoid-associated protein VS_0951.